The following is a 144-amino-acid chain: Small ribosomal subunit protein bS6 (144 aa).

The disordered stretch occupies residues 95-144 (PVTTPSPMMQDDKSKPDENSRGTAAPTVNVADDSASGAQVVAAEENDTQS). Over residues 104–114 (QDDKSKPDENS) the composition is skewed to basic and acidic residues.

This sequence belongs to the bacterial ribosomal protein bS6 family.

Functionally, binds together with bS18 to 16S ribosomal RNA. This is Small ribosomal subunit protein bS6 from Nitrosomonas eutropha (strain DSM 101675 / C91 / Nm57).